The chain runs to 156 residues: Transcription antitermination protein NusB (156 aa).

It belongs to the NusB family.

In terms of biological role, involved in transcription antitermination. Required for transcription of ribosomal RNA (rRNA) genes. Binds specifically to the boxA antiterminator sequence of the ribosomal RNA (rrn) operons. This Rickettsia massiliae (strain Mtu5) protein is Transcription antitermination protein NusB.